A 439-amino-acid chain; its full sequence is Xylose isomerase (439 aa).

Catalysis depends on residues H99 and D102. The Mg(2+) site is built by E230, E266, H269, D294, D305, D307, and D337.

It belongs to the xylose isomerase family. Homotetramer. Mg(2+) serves as cofactor.

It is found in the cytoplasm. The enzyme catalyses alpha-D-xylose = alpha-D-xylulofuranose. This is Xylose isomerase from Oceanobacillus iheyensis (strain DSM 14371 / CIP 107618 / JCM 11309 / KCTC 3954 / HTE831).